A 479-amino-acid polypeptide reads, in one-letter code: Ubiquinone biosynthesis monooxygenase COQ6, mitochondrial (479 aa).

The transit peptide at 1-17 directs the protein to the mitochondrion; the sequence is MFFSKVMLTRRILVRGL.

It belongs to the UbiH/COQ6 family. As to quaternary structure, component of a multi-subunit COQ enzyme complex, composed of at least COQ3, COQ4, COQ5, COQ6, COQ7 and COQ9. FAD is required as a cofactor.

It localises to the mitochondrion inner membrane. It carries out the reaction 4-hydroxy-3-(all-trans-hexaprenyl)benzoate + 2 reduced [2Fe-2S]-[ferredoxin] + O2 + 2 H(+) = 3,4-dihydroxy-5-(all-trans-hexaprenyl)benzoate + 2 oxidized [2Fe-2S]-[ferredoxin] + H2O. The enzyme catalyses 2-methoxy-6-(all-trans-hexaprenyl)phenol + 2 reduced [2Fe-2S]-[ferredoxin] + O2 + 2 H(+) = 2-methoxy-6-(all-trans-hexaprenyl)benzene-1,4-diol + 2 oxidized [2Fe-2S]-[ferredoxin] + H2O. It catalyses the reaction 4-amino-3-(all-trans-hexaprenyl)benzoate + 2 reduced [2Fe-2S]-[ferredoxin] + O2 + 2 H(+) = 4-amino-5-hydroxy-3-(all-trans-hexaprenyl)benzoate + 2 oxidized [2Fe-2S]-[ferredoxin] + H2O. The catalysed reaction is 4-amino-5-hydroxy-3-(all-trans-hexaprenyl)benzoate + 4 reduced [2Fe-2S]-[ferredoxin] + O2 + 5 H(+) = 3,4-dihydroxy-5-(all-trans-hexaprenyl)benzoate + 4 oxidized [2Fe-2S]-[ferredoxin] + NH4(+) + H2O. The protein operates within cofactor biosynthesis; ubiquinone biosynthesis. In terms of biological role, FAD-dependent monooxygenase required for two non-consecutive steps during ubiquinone biosynthesis. Required for the C5-ring hydroxylation during ubiquinone biosynthesis by catalyzing the hydroxylation of 4-hydroxy-3-(all-trans-hexaprenyl)benzoic acid to 3,4-dihydroxy-5-(all-trans-hexaprenyl)benzoic acid. Also acts downstream of COQ4, for the C1-hydroxylation during ubiquinone biosynthesis by catalyzing the hydroxylation of 2-methoxy-6-(all-trans-hexaprenyl)phenol to 2-methoxy-6-(all-trans-hexaprenyl)benzene-1,4-diol. The electrons required for the hydroxylation reaction are funneled indirectly from NADPH via ferredoxin (YAH1) and ferredoxin reductase (ARH1) to COQ6. Can also convert 3-hexaprenyl-4-aminobenzoic acid (HAB), a COQ2-prenylated pABA, to DHHB in a two step process. HAB is first hydroxylated at C5 to yield 3-hexaprenyl-4-amino-5-hydroxybenzoic acid (HHAB) which is further deaminated at C4 by COQ6 to produce DHHB. In Saccharomyces cerevisiae (strain ATCC 204508 / S288c) (Baker's yeast), this protein is Ubiquinone biosynthesis monooxygenase COQ6, mitochondrial.